A 934-amino-acid polypeptide reads, in one-letter code: Protein unc-45 homolog B (934 aa).

TPR repeat units follow at residues 9–42 (SVQL…CKKE), 48–81 (AVIY…DAAD), and 83–115 (KALY…EPKN). ARM repeat units follow at residues 174-213 (DAGA…GMCT), 216-255 (RARA…CVND), and 753-792 (DKLR…NLVC).

In terms of assembly, interacts with apobec2a, apobec2b, hsp90a.1, hsp90a.2, hsp90ab1 and myosin. As to expression, expressed in striated muscle tissue including somites, heart and craniofacial muscle. Detected in mesoderm adjacent to the dorsal midline during the late gastrula stages and in somitic mesoderm during development of trunk skeletal muscle. Also expressed in cranial skeletal muscle and in cardiac and smooth muscle. Detected in somitic muscle and heart primordium of 24 hour embryos. At later stages, expressed in muscles of pectoral fins, jaw, branchial arches and eye.

It is found in the cytoplasm. The protein localises to the myofibril. The protein resides in the sarcomere. It localises to the z line. Its subcellular location is the a band. It is found in the perinuclear region. Functionally, acts as a co-chaperone for HSP90 and is required for proper folding of the myosin motor domain. Plays a role in sarcomere formation during muscle cell development. Required for myoseptal integrity, myofiber attachment, motility and craniofacial development. Is necessary for normal early lens development. The chain is Protein unc-45 homolog B from Danio rerio (Zebrafish).